Consider the following 585-residue polypeptide: Parathyroid hormone/parathyroid hormone-related peptide receptor (585 aa).

The first 26 residues, 1–26, serve as a signal peptide directing secretion; sequence MGAPRISHSLALLLCCSVLSSVYALV. The Extracellular portion of the chain corresponds to 27-185; the sequence is DADDVITKEE…REREVFDRLG (159 aa). Disulfide bonds link cysteine 48–cysteine 114, cysteine 105–cysteine 145, and cysteine 128–cysteine 167. Residues 69–90 are disordered; that stretch reads MSRSAKTKKEKPAEKLYSQAEE. Residues asparagine 148, asparagine 158, asparagine 163, and asparagine 173 are each glycosylated (N-linked (GlcNAc...) asparagine). Residues 186 to 209 traverse the membrane as a helical segment; that stretch reads MIYTVGYSISLGSLTVAVLILGYF. Over 210–216 the chain is Cytoplasmic; sequence RRLHCTR. The chain crosses the membrane as a helical span at residues 217–236; the sequence is NYIHMHLFVSFMLRAVSIFI. Over 237-276 the chain is Extracellular; the sequence is KDAVLYSGVSTDEIERITEEELRAFTEPPPADKAGFVGCR. Residues 277–300 traverse the membrane as a helical segment; sequence VAVTVFLYFLTTNYYWILVEGLYL. Residues 301 to 314 lie on the Cytoplasmic side of the membrane; that stretch reads HSLIFMAFFSEKKY. A helical membrane pass occupies residues 315–336; it reads LWGFTLFGWGLPAVFVAVWVTV. Residues 337 to 355 lie on the Extracellular side of the membrane; sequence RATLANTECWDLSSGNKKW. Residues 356-376 traverse the membrane as a helical segment; that stretch reads IIQVPILAAIVVNFILFINII. Residues 377 to 403 are Cytoplasmic-facing; it reads RVLATKLRETNAGRCDTRQQYRKLLKS. Residues 404 to 422 traverse the membrane as a helical segment; the sequence is TLVLMPLFGVHYIVFMATP. Residues 423 to 434 lie on the Extracellular side of the membrane; sequence YTEVSGILWQVQ. Residues 435–457 form a helical membrane-spanning segment; it reads MHYEMLFNSFQGFFVAIIYCFCN. Residues 458–585 lie on the Cytoplasmic side of the membrane; that stretch reads GEVQAEIKKS…LLEEERETVM (128 aa). The Important for interaction with G proteins motif lies at 468 to 471; the sequence is WSRW. Positions 531–585 are disordered; it reads PGYVKHGSISENSLPSSGPEPGTKDDGYLNGSGLYEPMVGEQPPPLLEEERETVM.

It belongs to the G-protein coupled receptor 2 family. Homodimer in the absence of bound ligand. Peptide hormone binding leads to dissociation of the homodimer. Post-translationally, N-glycosylated.

Its subcellular location is the cell membrane. G-protein-coupled receptor for parathyroid hormone (PTH) and for parathyroid hormone-related peptide (PTHLH). Ligand binding causes a conformation change that triggers signaling via guanine nucleotide-binding proteins (G proteins) and modulates the activity of downstream effectors, such as adenylate cyclase (cAMP). PTH1R is coupled to G(s) G alpha proteins and mediates activation of adenylate cyclase activity. PTHLH dissociates from PTH1R more rapidly than PTH; as consequence, the cAMP response induced by PTHLH decays faster than the response induced by PTH. The chain is Parathyroid hormone/parathyroid hormone-related peptide receptor (PTH1R) from Didelphis virginiana (North American opossum).